The following is a 694-amino-acid chain: Polyphosphate kinase (694 aa).

An ATP-binding site is contributed by asparagine 45. Mg(2+)-binding residues include arginine 367 and arginine 397. Histidine 427 functions as the Phosphohistidine intermediate in the catalytic mechanism. ATP contacts are provided by tyrosine 460, arginine 553, and histidine 580.

Belongs to the polyphosphate kinase 1 (PPK1) family. The cofactor is Mg(2+). Post-translationally, an intermediate of this reaction is the autophosphorylated ppk in which a phosphate is covalently linked to a histidine residue through a N-P bond.

The enzyme catalyses [phosphate](n) + ATP = [phosphate](n+1) + ADP. Functionally, catalyzes the reversible transfer of the terminal phosphate of ATP to form a long-chain polyphosphate (polyP). The polypeptide is Polyphosphate kinase (Campylobacter coli).